The primary structure comprises 366 residues: Probable quinol oxidase subunit 2 (366 aa).

An N-terminal signal peptide occupies residues 1–19 (MSKFKSLLLLFGTLILLSG). Residue cysteine 20 is the site of N-palmitoyl cysteine attachment. The S-diacylglycerol cysteine moiety is linked to residue cysteine 20. Transmembrane regions (helical) follow at residues 38-58 (FLILYSIVFMLVICFVVLGMF) and 80-100 (AIIETIWFVIPIIIVAALAIP). Residues 330–366 (EPYNNEFKKDESKNAKEMKKISKDAQDQDNDDHGGGH) are disordered. The segment covering 335 to 366 (EFKKDESKNAKEMKKISKDAQDQDNDDHGGGH) has biased composition (basic and acidic residues).

This sequence belongs to the cytochrome c oxidase subunit 2 family.

Its subcellular location is the cell membrane. It catalyses the reaction 2 a quinol + O2 = 2 a quinone + 2 H2O. In terms of biological role, catalyzes quinol oxidation with the concomitant reduction of oxygen to water. Subunit II transfers the electrons from a quinol to the binuclear center of the catalytic subunit I. This Staphylococcus aureus (strain bovine RF122 / ET3-1) protein is Probable quinol oxidase subunit 2 (qoxA).